The primary structure comprises 245 residues: Ribonuclease 3 (245 aa).

An RNase III domain is found at Ala19–Gly144. Glu57 is a binding site for Mg(2+). Asp61 is an active-site residue. Residues Asp130 and Glu133 each coordinate Mg(2+). The active site involves Glu133. A DRBM domain is found at Asp169–Val238.

It belongs to the ribonuclease III family. In terms of assembly, homodimer. Mg(2+) serves as cofactor.

Its subcellular location is the cytoplasm. It carries out the reaction Endonucleolytic cleavage to 5'-phosphomonoester.. In terms of biological role, digests double-stranded RNA. Involved in the processing of primary rRNA transcript to yield the immediate precursors to the large and small rRNAs (23S and 16S). Processes some mRNAs, and tRNAs when they are encoded in the rRNA operon. Processes pre-crRNA and tracrRNA of type II CRISPR loci if present in the organism. This chain is Ribonuclease 3, found in Brucella abortus (strain S19).